Here is a 198-residue protein sequence, read N- to C-terminus: GTP-binding protein Di-Ras1 (198 aa).

GTP is bound by residues 17–22, 33–39, 61–65, 121–125, Ala-151, and 151–152; these read GVGKSS, RDTYIPT, DTTGS, NKCDE, and AK. The short motif at 36–44 is the Effector region element; sequence YIPTIEDTY. Cys-195 carries the cysteine methyl ester modification. A lipid anchor (S-geranylgeranyl cysteine) is attached at Cys-195. Positions 196 to 198 are cleaved as a propeptide — removed in mature form; the sequence is ALM.

The protein belongs to the small GTPase superfamily. Di-Ras family.

It localises to the cell membrane. In terms of biological role, displays low GTPase activity and exists predominantly in the GTP-bound form. This Mus musculus (Mouse) protein is GTP-binding protein Di-Ras1 (Diras1).